We begin with the raw amino-acid sequence, 929 residues long: ATP-dependent RNA helicase DDX42 (929 aa).

Lys5 carries the N6-acetyllysine modification. Position 12 is an omega-N-methylarginine (Arg12). Disordered stretches follow at residues 25 to 119 (KKEE…LEAF) and 182 to 203 (EYDS…LPPI). Residues 35 to 52 (SHSAFGAASSSSGFGKSA) show a composition bias toward low complexity. Ser58 carries the phosphoserine modification. The span at 70 to 84 (DEENAYFEDEEEDSS) shows a compositional bias: acidic residues. 4 positions are modified to phosphoserine: Ser96, Ser104, Ser109, and Ser111. Residues 116–157 (LEAFMAEVEDQAARDMKRLEEKDKERKNVKGIRDDIEEEDDQ) adopt a coiled-coil conformation. Ser185 bears the Phosphoserine mark. A Q motif motif is present at residues 253-281 (SSFAHFGFDEQLMHQIRKSEYTQPTPIQC). A Helicase ATP-binding domain is found at 284-459 (VPVALSGRDM…RDILIDPIRV (176 aa)). Residue 297 to 304 (AKTGSGKT) participates in ATP binding. Positions 407-410 (DEAD) match the DEAD box motif. The 146-residue stretch at 487–632 (WLTRRLVEFT…HVSKELLDLA (146 aa)) folds into the Helicase C-terminal domain. Disordered stretches follow at residues 662-682 (ERPG…VMSN) and 723-929 (GTSS…RWDS). Low complexity predominate over residues 723-737 (GTSSAGASGWTSAGS). Polar residues-rich tracts occupy residues 738-777 (LNSV…SSAP) and 787-798 (GVNNTASGNNSR). A necessary for interaction with TP53BP2 region spans residues 739–828 (NSVPTNSAQQ…RHSHGDGGNR (90 aa)). Residues 821–911 (SHGDGGNRHG…KVDSKTDKTP (91 aa)) show a composition bias toward basic and acidic residues. Residue Lys894 forms a Glycyl lysine isopeptide (Lys-Gly) (interchain with G-Cter in SUMO2) linkage.

This sequence belongs to the DEAD box helicase family. DDX42 subfamily. As to quaternary structure, transient component of the SF3B subcomplex of the 17S U2 SnRNP complex. Interacts (via the C-terminus) with TP53BP2; the interaction is not inhibitied by TP53BP2 ubiquitination and is independent of p53/TP53.

It localises to the cytoplasm. The protein resides in the nucleus. The enzyme catalyses ATP + H2O = ADP + phosphate + H(+). ATP-dependent RNA helicase that binds to partially double-stranded RNAs (dsRNAs) in order to unwind RNA secondary structures. Unwinding is promoted in the presence of single-strand binding proteins. Also mediates RNA duplex formation thereby displacing the single-strand RNA binding protein. ATP and ADP modulate its activity: ATP binding and hydrolysis by DDX42 triggers RNA strand separation, whereas the ADP-bound form of the protein triggers annealing of complementary RNA strands. Required for assembly of the 17S U2 SnRNP complex of the spliceosome, a large ribonucleoprotein complex that removes introns from transcribed pre-mRNAs: DDX42 associates transiently with the SF3B subcomplex of the 17S U2 SnRNP complex and is released after fulfilling its role in the assembly of 17S U2 SnRNP. Involved in the survival of cells by interacting with TP53BP2 and thereby counteracting the apoptosis-stimulating activity of TP53BP2. Relocalizes TP53BP2 to the cytoplasm. The polypeptide is ATP-dependent RNA helicase DDX42 (Ddx42) (Mus musculus (Mouse)).